The chain runs to 64 residues: LKDGYIIDDLNCTFFCGRNAYCDDECKKKGGESGYCQWASPYGNACWCYKLPDRVSIKEKGRCN.

In terms of domain architecture, LCN-type CS-alpha/beta spans 2 to 64 (KDGYIIDDLN…VSIKEKGRCN (63 aa)). 4 disulfides stabilise this stretch: cysteine 12/cysteine 63, cysteine 16/cysteine 36, cysteine 22/cysteine 46, and cysteine 26/cysteine 48. Position 64 is an asparagine amide (asparagine 64).

In terms of tissue distribution, expressed by the venom gland.

The protein resides in the secreted. Its function is as follows. Alpha toxins bind voltage-independently at site-3 of sodium channels (Nav) and inhibit the inactivation of the activated channels, thereby blocking neuronal transmission. The chain is Alpha-toxin Amm5 from Androctonus mauritanicus mauritanicus (Scorpion).